A 47-amino-acid polypeptide reads, in one-letter code: NADH dehydrogenase [ubiquinone] iron-sulfur protein 2 (47 aa).

The protein belongs to the complex I 49 kDa subunit family. In terms of assembly, complex I is composed of about 45 different subunits. This is a component of the iron-sulfur (IP) fragment of the enzyme.

It is found in the mitochondrion inner membrane. The catalysed reaction is a ubiquinone + NADH + 5 H(+)(in) = a ubiquinol + NAD(+) + 4 H(+)(out). Functionally, core subunit of the mitochondrial membrane respiratory chain NADH dehydrogenase (Complex I) that is believed to belong to the minimal assembly required for catalysis. Complex I functions in the transfer of electrons from NADH to the respiratory chain. The immediate electron acceptor for the enzyme is believed to be ubiquinone. Component of the iron-sulfur (IP) fragment of the enzyme. The protein is NADH dehydrogenase [ubiquinone] iron-sulfur protein 2 (NAD7) of Solanum tuberosum (Potato).